A 475-amino-acid chain; its full sequence is 3-isopropylmalate dehydratase large subunit (475 aa).

[4Fe-4S] cluster-binding residues include Cys352, Cys413, and Cys416.

It belongs to the aconitase/IPM isomerase family. LeuC type 1 subfamily. As to quaternary structure, heterodimer of LeuC and LeuD. It depends on [4Fe-4S] cluster as a cofactor.

The catalysed reaction is (2R,3S)-3-isopropylmalate = (2S)-2-isopropylmalate. The protein operates within amino-acid biosynthesis; L-leucine biosynthesis; L-leucine from 3-methyl-2-oxobutanoate: step 2/4. Catalyzes the isomerization between 2-isopropylmalate and 3-isopropylmalate, via the formation of 2-isopropylmaleate. This is 3-isopropylmalate dehydratase large subunit from Pseudomonas syringae pv. tomato (strain ATCC BAA-871 / DC3000).